Here is a 192-residue protein sequence, read N- to C-terminus: Orotate phosphoribosyltransferase (192 aa).

5-phospho-alpha-D-ribose 1-diphosphate contacts are provided by residues Arg84, Lys88, and 110–118 (DDVLTTGNS). Orotate-binding residues include Thr114 and Arg142.

It belongs to the purine/pyrimidine phosphoribosyltransferase family. PyrE subfamily. Homodimer. Mg(2+) is required as a cofactor.

It catalyses the reaction orotidine 5'-phosphate + diphosphate = orotate + 5-phospho-alpha-D-ribose 1-diphosphate. It functions in the pathway pyrimidine metabolism; UMP biosynthesis via de novo pathway; UMP from orotate: step 1/2. Catalyzes the transfer of a ribosyl phosphate group from 5-phosphoribose 1-diphosphate to orotate, leading to the formation of orotidine monophosphate (OMP). The chain is Orotate phosphoribosyltransferase from Pyrobaculum calidifontis (strain DSM 21063 / JCM 11548 / VA1).